The chain runs to 365 residues: Glycerol dehydrogenase (365 aa).

NAD(+) is bound by residues Asp-37, Gly-94, Lys-95, Thr-116, and Ser-119. Asp-121 is a binding site for glycerol. The NAD(+) site is built by Ser-125, Leu-127, and Tyr-131. Asp-171, His-254, and His-271 together coordinate Mn(2+). Position 254 (His-254) interacts with glycerol.

This sequence belongs to the iron-containing alcohol dehydrogenase family. As to quaternary structure, homohexamer. It depends on Mn(2+) as a cofactor.

The catalysed reaction is glycerol + NAD(+) = dihydroxyacetone + NADH + H(+). It carries out the reaction hydroxyacetone + NADH + H(+) = (S)-propane-1,2-diol + NAD(+). The protein operates within polyol metabolism; glycerol fermentation; glycerone phosphate from glycerol (oxidative route): step 1/2. Inhibited by zinc. Functionally, catalyzes the NAD-dependent oxidation of glycerol to dihydroxyacetone (glycerone). Allows microorganisms to utilize glycerol as a source of carbon under anaerobic conditions. Exhibits a rather broad substrate specificity since it can also oxidize 1,2-propanediol and 2,3-butanediol and reduce dihydroxyacetone. Cannot use NADP(+) as an electron acceptor for the oxidation of glycerol. This Citrobacter freundii protein is Glycerol dehydrogenase.